Reading from the N-terminus, the 244-residue chain is Ribonuclease PH (244 aa).

Residues arginine 90 and 128 to 130 (GTR) contribute to the phosphate site.

Belongs to the RNase PH family. As to quaternary structure, homohexameric ring arranged as a trimer of dimers.

It catalyses the reaction tRNA(n+1) + phosphate = tRNA(n) + a ribonucleoside 5'-diphosphate. Its function is as follows. Phosphorolytic 3'-5' exoribonuclease that plays an important role in tRNA 3'-end maturation. Removes nucleotide residues following the 3'-CCA terminus of tRNAs; can also add nucleotides to the ends of RNA molecules by using nucleoside diphosphates as substrates, but this may not be physiologically important. Probably plays a role in initiation of 16S rRNA degradation (leading to ribosome degradation) during starvation. The sequence is that of Ribonuclease PH from Prochlorococcus marinus (strain MIT 9313).